Consider the following 989-residue polypeptide: Vacuolar membrane protease (989 aa).

Residues 1–25 form a disordered region; sequence MDRQSLRTTLRAMDASNENGSAKGA. The Cytoplasmic segment spans residues 1–41; the sequence is MDRQSLRTTLRAMDASNENGSAKGAKKTTIGSFVRWTFGFN. The chain crosses the membrane as a helical span at residues 42–62; the sequence is SVPLTTLVTITTVLLGLLVYV. At 63–383 the chain is on the vacuolar side; that stretch reads STSVNPPDVT…YLFIILPLQY (321 aa). Zn(2+)-binding residues include histidine 181 and aspartate 193. The Proton acceptor role is filled by glutamate 227. Residue glutamate 228 coordinates Zn(2+). The N-linked (GlcNAc...) asparagine glycan is linked to asparagine 245. 2 residues coordinate Zn(2+): glutamate 253 and histidine 325. The helical transmembrane segment at 384 to 404 threads the bilayer; that stretch reads IFVISCLTLAVGPIFVGFLFL. Over 405–426 the chain is Cytoplasmic; it reads LVLRKQINAGTSETILGGWLRS. Residues 427–447 form a helical membrane-spanning segment; sequence IVSVLVSVVATYFVVETLHLG. The Vacuolar segment spans residues 448–460; the sequence is NELYVVRSFYTPL. The helical transmembrane segment at 461-481 threads the bilayer; the sequence is FAGLGTFIFVNYVLLGFFHFV. Topologically, residues 482–488 are cytoplasmic; sequence RPVCDQK. Residues 489–509 traverse the membrane as a helical segment; sequence LIILLELSVVLWVLLLLSVIH. Residues 510–520 are Vacuolar-facing; it reads EATHKATGEYH. A helical membrane pass occupies residues 521-541; that stretch reads FLILYIVVATASILGLFGHLV. At 542-611 the chain is on the cytoplasmic side; the sequence is TSTETSTFVE…IAVSMGYDWS (70 aa). Residues 548–576 form a disordered region; it reads TFVEGPEDEEDTVDASEATETSPLLPEAS. The span at 552 to 561 shows a compositional bias: acidic residues; it reads GPEDEEDTVD. The chain crosses the membrane as a helical span at residues 612 to 632; that stretch reads IQFLLVVPITFFVTFGLAASL. Residues 633–648 lie on the Vacuolar side of the membrane; that stretch reads LDGLHQTPLESEKSAD. A helical transmembrane segment spans residues 649-669; the sequence is FVYTTITAMSVLVGITFLPFV. Residues 670–673 lie on the Cytoplasmic side of the membrane; sequence HKLQ. A helical transmembrane segment spans residues 674–694; the sequence is VFVPIVVVGVAVTASFVHILS. The Vacuolar portion of the chain corresponds to 695–989; it reads PPFSSNAPAK…LVEVSKYVEL (295 aa). N-linked (GlcNAc...) asparagine glycans are attached at residues asparagine 745, asparagine 793, and asparagine 822.

Belongs to the peptidase M28 family. The cofactor is Zn(2+).

It localises to the vacuole membrane. May be involved in vacuolar sorting and osmoregulation. This is Vacuolar membrane protease from Yarrowia lipolytica (strain CLIB 122 / E 150) (Yeast).